The following is a 698-amino-acid chain: Polyribonucleotide nucleotidyltransferase (698 aa).

Residues Asp-490 and Asp-496 each coordinate Mg(2+). A KH domain is found at 557-616; it reads PKVVTMTIKPDKIRDVIGPGGKKINEIIDETGVKLDIEQDGTIFIGAVDQAMINRAREII. Residues 626 to 694 form the S1 motif domain; it reads GQTYQATVKR…KQGRVNASHR (69 aa).

Belongs to the polyribonucleotide nucleotidyltransferase family. Requires Mg(2+) as cofactor.

The protein resides in the cytoplasm. The catalysed reaction is RNA(n+1) + phosphate = RNA(n) + a ribonucleoside 5'-diphosphate. Its function is as follows. Involved in mRNA degradation. Catalyzes the phosphorolysis of single-stranded polyribonucleotides processively in the 3'- to 5'-direction. The sequence is that of Polyribonucleotide nucleotidyltransferase from Staphylococcus aureus (strain MSSA476).